A 53-amino-acid polypeptide reads, in one-letter code: Large ribosomal subunit protein eL40 (53 aa).

It belongs to the eukaryotic ribosomal protein eL40 family.

This Pyrobaculum neutrophilum (strain DSM 2338 / JCM 9278 / NBRC 100436 / V24Sta) (Thermoproteus neutrophilus) protein is Large ribosomal subunit protein eL40.